Reading from the N-terminus, the 393-residue chain is Mitochondrial inner membrane magnesium transporter LPE10 (393 aa).

The N-terminal 45 residues, 1–45 (MLGLRLPVCRRAVMASPRACWRLWHSSTAAAAGMQDLSAVLQRNL), are a transit peptide targeting the mitochondrion. A run of 2 helical transmembrane segments spans residues 323–343 (FAIG…YGMN) and 350–370 (EGNV…VCLF). Residues 340 to 343 (YGMN) carry the YGMN motif.

The protein belongs to the CorA metal ion transporter (MIT) (TC 1.A.35) family. As to quaternary structure, forms homooligomers. Interacts with MRS2.

The protein resides in the mitochondrion inner membrane. Mitochondrial inner membrane magnesium transporter required for mitochondrial magnesium homeostasis. Modulates the conductance of the MRS2 channel. Involved in the splicing of mRNA group II introns in mitochondria by affecting mitochondrial magnesium concentrations, which are critical for group II intron splicing. This chain is Mitochondrial inner membrane magnesium transporter LPE10 (LPE10), found in Eremothecium gossypii (strain ATCC 10895 / CBS 109.51 / FGSC 9923 / NRRL Y-1056) (Yeast).